The following is a 132-amino-acid chain: Small ribosomal subunit protein uS11 (132 aa).

Belongs to the universal ribosomal protein uS11 family. As to quaternary structure, part of the 30S ribosomal subunit. Interacts with proteins S7 and S18. Binds to IF-3.

Located on the platform of the 30S subunit, it bridges several disparate RNA helices of the 16S rRNA. Forms part of the Shine-Dalgarno cleft in the 70S ribosome. The protein is Small ribosomal subunit protein uS11 of Chlamydia muridarum (strain MoPn / Nigg).